The chain runs to 240 residues: MIEFKNVSKHFGPTQVLHNIDLNIAQGEVVVIIGPSGSGKSTLLRCINKLEEITSGDLIVDGLKVNDPKVDERLIRQEAGMVFQQFYLFPHLTALENVMFGPLRVRGANKEEAEKLARELLAKVGLAERAHHYPSELSGGQQQRVAIARALAVKPKMMLFDEPTSALDPELRHEVLKVMQDLAEEGMTMVIVTHEIGFAEKVASRLIFIDKGRIAEDGNPQVLIKNPPSQRLQEFLQHVS.

In terms of domain architecture, ABC transporter spans 2–236 (IEFKNVSKHF…PPSQRLQEFL (235 aa)). 34–41 (GPSGSGKS) is a binding site for ATP.

Belongs to the ABC transporter superfamily. In terms of assembly, heterotetramer with 2 subunits of GlnQ and 2 subunits of GlnP.

Its subcellular location is the cell inner membrane. Functionally, part of the binding-protein-dependent transport system for glutamine. Probably responsible for energy coupling to the transport system. This is Glutamine transport ATP-binding protein GlnQ (glnQ) from Escherichia coli (strain K12).